The sequence spans 188 residues: UPF0301 protein ABO_0112 (188 aa).

This sequence belongs to the UPF0301 (AlgH) family.

The chain is UPF0301 protein ABO_0112 from Alcanivorax borkumensis (strain ATCC 700651 / DSM 11573 / NCIMB 13689 / SK2).